The primary structure comprises 173 residues: Co-chaperone protein HscB homolog (173 aa).

The region spanning 3-75 (NPFALFDLPI…ILRADCIIAL (73 aa)) is the J domain.

Belongs to the HscB family. As to quaternary structure, interacts with HscA and stimulates its ATPase activity.

In terms of biological role, co-chaperone involved in the maturation of iron-sulfur cluster-containing proteins. Seems to help targeting proteins to be folded toward HscA. The protein is Co-chaperone protein HscB homolog of Mannheimia succiniciproducens (strain KCTC 0769BP / MBEL55E).